The primary structure comprises 101 residues: Urease subunit beta (101 aa).

The protein belongs to the urease beta subunit family. Heterotrimer of UreA (gamma), UreB (beta) and UreC (alpha) subunits. Three heterotrimers associate to form the active enzyme.

It localises to the cytoplasm. It catalyses the reaction urea + 2 H2O + H(+) = hydrogencarbonate + 2 NH4(+). It functions in the pathway nitrogen metabolism; urea degradation; CO(2) and NH(3) from urea (urease route): step 1/1. In Bradyrhizobium diazoefficiens (strain JCM 10833 / BCRC 13528 / IAM 13628 / NBRC 14792 / USDA 110), this protein is Urease subunit beta.